Here is a 579-residue protein sequence, read N- to C-terminus: ERV-BabFcenv provirus ancestral Env polyprotein (579 aa).

An N-terminal signal peptide occupies residues 1–22 (MISAVLNLPSTPLLPLLWFTLI). A surface protein region spans residues 23–387 (IPASLTNPKF…LSSSNNIQKQ (365 aa)). The Extracellular segment spans residues 23–523 (IPASLTNPKF…VWLLPVVQQM (501 aa)). N-linked (GlcNAc...) asparagine glycans are attached at residues asparagine 135, asparagine 203, asparagine 242, and asparagine 251. The CXXC motif lies at 255-258 (CFLC). N-linked (GlcNAc...) asparagine glycans are attached at residues asparagine 276, asparagine 312, and asparagine 337. Residues 388-408 (AVFLPLIIGVSLASSLVASGL) are fusion peptide. The transmembrane protein stretch occupies residues 388 to 579 (AVFLPLIIGV…LPTSDPNYAP (192 aa)). Residues 453–469 (AQNRRALDLLTAEKGGT) carry the CKS-17 motif. A disulfide bridge links cysteine 470 with cysteine 477. The short motif at 470 to 478 (CLFLGEECC) is the CX6CC element. A glycan (N-linked (GlcNAc...) asparagine) is linked at asparagine 482. Residues 524 to 544 (LPFLIPILILCLMLCLAPILI) traverse the membrane as a helical segment. Over 545-579 (KFLRARVQEITRVTFNQMLLHPYTQLPTSDPNYAP) the chain is Cytoplasmic.

The protein belongs to the gamma type-C retroviral envelope protein family. HERV class-I F(c)1 env subfamily. Specific enzymatic cleavages in vivo yield the mature SU and TM proteins. Post-translationally, the CXXC motif is highly conserved across a broad range of retroviral envelope proteins. It is thought to participate in the formation of a labile disulfide bond possibly with the CX6CC motif present in the transmembrane domain.

It localises to the cell membrane. Its function is as follows. Retroviral envelope proteins mediate receptor recognition and membrane fusion during early infection. Endogenous envelope proteins may have kept, lost or modified their original function during evolution. The polypeptide is ERV-BabFcenv provirus ancestral Env polyprotein (Papio anubis (Olive baboon)).